A 367-amino-acid polypeptide reads, in one-letter code: 2-aminoethylphosphonate--pyruvate transaminase (367 aa).

Position 194 is an N6-(pyridoxal phosphate)lysine (Lys194).

This sequence belongs to the class-V pyridoxal-phosphate-dependent aminotransferase family. PhnW subfamily. In terms of assembly, homodimer. It depends on pyridoxal 5'-phosphate as a cofactor.

The enzyme catalyses (2-aminoethyl)phosphonate + pyruvate = phosphonoacetaldehyde + L-alanine. Functionally, involved in phosphonate degradation. The sequence is that of 2-aminoethylphosphonate--pyruvate transaminase from Klebsiella pneumoniae subsp. pneumoniae (strain ATCC 700721 / MGH 78578).